The following is a 470-amino-acid chain: MSTNEGSLWGGRFAGGPSDALAALSKSTHFDWVLAPYDLTASRAHTMVLFRAGLLTEEQRDGLLAGLDSLAQDVADGSFGPLVTDEDVHAALERGLIDRVGPDLGGRLRAGRSRNDQVAALFRMWLRDAVRRVATGVLDVVGALAEQAAAHPSAIMPGKTHLQSAQPILLAHHLLAHAHPLLRDLDRIVDFDKRAAVSPYGSGALAGSSLGLDPDAIAADLGFSAAADNSVDATAARDFAAEAAFVFAMIAVDLSRLAEDIIVWSSTEFGYVTLHDSWSTGSSIMPQKKNPDIAELARGKSGRLIGNLAGLLATLKAQPLAYNRDLQEDKEPVFDSVAQLELLLPAMAGLVASLTFNVQRMAELAPAGYTLATDLAEWLVRQGVPFRSAHEAAGAAVRAAEQRGVGLQELTDDELAAISPELTPQVREVLTIEGSVSARDCRGGTAPGRVAEQLNAIGEAAERLRRQLVR.

It belongs to the lyase 1 family. Argininosuccinate lyase subfamily.

It is found in the cytoplasm. The enzyme catalyses 2-(N(omega)-L-arginino)succinate = fumarate + L-arginine. It participates in amino-acid biosynthesis; L-arginine biosynthesis; L-arginine from L-ornithine and carbamoyl phosphate: step 3/3. The sequence is that of Argininosuccinate lyase from Mycobacterium tuberculosis (strain ATCC 25618 / H37Rv).